Consider the following 825-residue polypeptide: Translation initiation factor IF-2 (825 aa).

4 stretches are compositionally biased toward basic and acidic residues: residues 1–19, 35–45, 70–98, and 113–122; these read MTKK…DNKK, RKGEKKTEGKR, LLKD…EYKK, and KKVESVEKPA. The interval 1-239 is disordered; that stretch reads MTKKQENETS…TQRKDRPLPE (239 aa). The segment covering 158–169 has biased composition (low complexity); the sequence is PSSSRRPSSRPS. A compositionally biased stretch (basic residues) spans 181–191; it reads GRRRKSGKPGR. The span at 194 to 208 shows a compositional bias: polar residues; sequence QNSYADQGRGANSNR. A compositionally biased stretch (basic residues) spans 211–220; that stretch reads QRKRKNKKHQ. One can recognise a tr-type G domain in the interval 326–495; sequence VRPPVVTIMG…ILEADMLELK (170 aa). A G1 region spans residues 335–342; that stretch reads GHVDHGKT. 335 to 342 provides a ligand contact to GTP; that stretch reads GHVDHGKT. The G2 stretch occupies residues 360–364; it reads GITQN. Residues 381 to 384 are G3; the sequence is DTPG. GTP contacts are provided by residues 381-385 and 435-438; these read DTPGH and NKMD. A G4 region spans residues 435–438; the sequence is NKMD. The tract at residues 471-473 is G5; it reads SAK.

It belongs to the TRAFAC class translation factor GTPase superfamily. Classic translation factor GTPase family. IF-2 subfamily.

It localises to the cytoplasm. In terms of biological role, one of the essential components for the initiation of protein synthesis. Protects formylmethionyl-tRNA from spontaneous hydrolysis and promotes its binding to the 30S ribosomal subunits. Also involved in the hydrolysis of GTP during the formation of the 70S ribosomal complex. This Lactobacillus delbrueckii subsp. bulgaricus (strain ATCC BAA-365 / Lb-18) protein is Translation initiation factor IF-2.